Consider the following 33-residue polypeptide: Cytochrome b6-f complex subunit 8 (33 aa).

The helical transmembrane segment at 2–22 (LFTVAWASLAAMFSFSIAMVV) threads the bilayer.

This sequence belongs to the PetN family. The 4 large subunits of the cytochrome b6-f complex are cytochrome b6, subunit IV (17 kDa polypeptide, PetD), cytochrome f and the Rieske protein, while the 4 small subunits are PetG, PetL, PetM and PetN. The complex functions as a dimer.

It is found in the cellular thylakoid membrane. Its function is as follows. Component of the cytochrome b6-f complex, which mediates electron transfer between photosystem II (PSII) and photosystem I (PSI), cyclic electron flow around PSI, and state transitions. The sequence is that of Cytochrome b6-f complex subunit 8 from Parasynechococcus marenigrum (strain WH8102).